Reading from the N-terminus, the 429-residue chain is Histidine--tRNA ligase (429 aa).

This sequence belongs to the class-II aminoacyl-tRNA synthetase family. As to quaternary structure, homodimer.

Its subcellular location is the cytoplasm. The catalysed reaction is tRNA(His) + L-histidine + ATP = L-histidyl-tRNA(His) + AMP + diphosphate + H(+). In Dechloromonas aromatica (strain RCB), this protein is Histidine--tRNA ligase.